A 572-amino-acid polypeptide reads, in one-letter code: Transmembrane glycoprotein NMB (572 aa).

A signal peptide spans 1 to 22; it reads MECLYYFLGFLLLAARLPLDAA. Topologically, residues 23 to 498 are extracellular; it reads KRFHDVLGNE…DPASPLRMAN (476 aa). Residues 64–66 carry the Cell attachment site motif; it reads RGD. N-linked (GlcNAc...) asparagine glycosylation is found at Asn93, Asn134, Asn146, Asn200, Asn249, Asn275, Asn296, Asn300, Asn306, and Asn312. Residues 240-327 form the PKD domain; it reads VTMFQKNDRN…AAPGPCPPPP (88 aa). Residues 320–362 form a disordered region; it reads PGPCPPPPPPPRPSKPTPSLATTLKSYDSNTPGPAGDNPLELS. Over residues 321–335 the composition is skewed to pro residues; it reads GPCPPPPPPPRPSKP. Residues 338 to 351 are compositionally biased toward polar residues; it reads SLATTLKSYDSNTP. N-linked (GlcNAc...) asparagine glycans are attached at residues Asn459 and Asn467. The helical transmembrane segment at 499-519 threads the bilayer; it reads SALISVGCLAIFVTVISLLVY. At 520–572 the chain is on the cytoplasmic side; that stretch reads KKHKEYNPIENSPGNVVRSKGLSVFLNRAKAVFFPGNQEKDPLLKNQEFKGVS. Ser542 bears the Phosphoserine mark.

The protein belongs to the PMEL/NMB family. In terms of tissue distribution, widely expressed, but very low expression, if any, in the brain. Expressed in the epidermis with higher levels in melanocytes compared with keratinocytes and Langerhans cells (at protein level). Expressed in peripheral blood, but not bone marrow mononuclear cells. Expressed in tissue macrophages, including liver Kuppfer cells and lung alveolar macrophages, in podocytes and in some cells of the ciliary body of the eye (at protein level). May be overexpressed in various cancers, including melanoma and glioblastoma multiforme.

It is found in the cell membrane. It localises to the melanosome membrane. The protein resides in the early endosome membrane. Could be a melanogenic enzyme. This Homo sapiens (Human) protein is Transmembrane glycoprotein NMB (GPNMB).